The chain runs to 428 residues: Ectoine/5-hydroxyectoine TRAP transporter large permease protein UehC (428 aa).

12 consecutive transmembrane segments (helical) span residues methionine 9–isoleucine 29, leucine 49–isoleucine 69, alanine 99–isoleucine 119, alanine 139–isoleucine 159, phenylalanine 172–isoleucine 192, alanine 217–serine 237, alanine 242–leucine 262, glycine 273–isoleucine 293, isoleucine 302–isoleucine 322, phenylalanine 324–phenylalanine 344, valine 366–phenylalanine 386, and phenylalanine 400–phenylalanine 420.

It belongs to the TRAP transporter large permease family. The complex comprises the extracytoplasmic solute receptor protein UehA, and the two transmembrane proteins UehB and UehC.

The protein localises to the cell inner membrane. Functionally, part of the tripartite ATP-independent periplasmic (TRAP) transport system UehABC, which imports both ectoine and 5-hydroxyectoine as nutrients, and not as osmoprotectants. This is Ectoine/5-hydroxyectoine TRAP transporter large permease protein UehC from Ruegeria pomeroyi (strain ATCC 700808 / DSM 15171 / DSS-3) (Silicibacter pomeroyi).